Consider the following 143-residue polypeptide: Hemoglobin subunit alpha-1 (143 aa).

Ser2 bears the N-acetylserine mark. The region spanning 2–143 (SLSAKDKATV…LALALCEKYR (142 aa)) is the Globin domain. His60 contributes to the O2 binding site. His89 contacts heme b.

This sequence belongs to the globin family. Hb 1 is a heterotetramer of two alpha-1 and two beta-1 chains. In terms of tissue distribution, red blood cells.

In terms of biological role, involved in oxygen transport from gills to the various peripheral tissues. The polypeptide is Hemoglobin subunit alpha-1 (hba1) (Boreogadus saida (Polar cod)).